Reading from the N-terminus, the 735-residue chain is Photosystem I P700 chlorophyll a apoprotein A2 (735 aa).

The next 8 helical transmembrane spans lie at 46–69 (IFASHFGQIALIFLWASGNLFYVS), 135–158 (LSTASMFLLILSVLFLIAGFIHGY), 176–200 (LNHHLSALFGVSSLAWTGHLIHVAI), 274–292 (IAHHHLAIAVLFIVAGHMY), 329–352 (LNLQLALALAAVGTICSLVAQHMY), 368–394 (AALYTHHQYIAGFIMCGAFAHGTIFLV), 416–438 (VIISHLSWVCLFLGFHTLGLYVH), and 521–539 (FLVHHAIALGLHTTTLILV). Positions 563 and 572 each coordinate [4Fe-4S] cluster. Helical transmembrane passes span 579-600 (AFYLAIFWMLNTIGWVTFYWHW) and 647-669 (LSVWSWMFLFGHLIYATGFMFLI). Chlorophyll a-binding residues include H658, M666, and Y674. A phylloquinone-binding site is contributed by W675. A helical membrane pass occupies residues 708 to 728 (FVGLIHFTVGYILTYAAFLIA).

It belongs to the PsaA/PsaB family. As to quaternary structure, the PsaA/B heterodimer binds the P700 chlorophyll special pair and subsequent electron acceptors. PSI consists of a core antenna complex that captures photons, and an electron transfer chain that converts photonic excitation into a charge separation. The eukaryotic PSI reaction center is composed of at least 11 subunits. P700 is a chlorophyll a/chlorophyll a' dimer, A0 is one or more chlorophyll a, A1 is one or both phylloquinones and FX is a shared 4Fe-4S iron-sulfur center. serves as cofactor.

It localises to the plastid. Its subcellular location is the chloroplast thylakoid membrane. The catalysed reaction is reduced [plastocyanin] + hnu + oxidized [2Fe-2S]-[ferredoxin] = oxidized [plastocyanin] + reduced [2Fe-2S]-[ferredoxin]. Its function is as follows. PsaA and PsaB bind P700, the primary electron donor of photosystem I (PSI), as well as the electron acceptors A0, A1 and FX. PSI is a plastocyanin/cytochrome c6-ferredoxin oxidoreductase, converting photonic excitation into a charge separation, which transfers an electron from the donor P700 chlorophyll pair to the spectroscopically characterized acceptors A0, A1, FX, FA and FB in turn. Oxidized P700 is reduced on the lumenal side of the thylakoid membrane by plastocyanin or cytochrome c6. The polypeptide is Photosystem I P700 chlorophyll a apoprotein A2 (Bigelowiella natans (Pedinomonas minutissima)).